The chain runs to 477 residues: MKVTLPEFERAGVMVVGDVMLDRYWYGPTSRISPEAPVPVVKVNTIEERPGGAANVAMNIASLGANARLVGLTGIDDAARALSKSLADVNVKCDFVSVPTHPTITKLRVLSRNQQLIRLDFEEGFEGVDPQPLHERINQALSSIGALVLSDYAKGALASVQQMIQLARKAGVPVLIDPKGTDFERYRGATLLTPNLSEFEAVVGKCKTEEEIVERGMKLIADYELSALLVTRSEQGMSLLQPGKAPLHMPTQAQEVYDVTGAGDTVIGVLAATLAAGNSLEEACFFANAAAGVVVGKLGTSTVSPIELENAVRGRADTGFGVMTEEELKLAVAAARKRGEKVVMTNGVFDILHAGHVSYLANARKLGDRLIVAVNSDASTKRLKGDSRPVNPLEQRMIVLGALEAVDWVVSFEEDTPQRLIAGILPDLLVKGGDYKPEEIAGSKEVWANGGEVLVLNFEDGCSTTNIIKKIQQDKKG.

Positions 1-318 (MKVTLPEFER…ENAVRGRADT (318 aa)) are ribokinase. The residue at position 179 (Lys179) is an N6-acetyllysine. ATP is bound at residue 195-198 (NLSE). Residue Asp264 is part of the active site. The cytidylyltransferase stretch occupies residues 344-477 (MTNGVFDILH…IKKIQQDKKG (134 aa)).

This sequence in the N-terminal section; belongs to the carbohydrate kinase PfkB family. The protein in the C-terminal section; belongs to the cytidylyltransferase family. In terms of assembly, homodimer.

The catalysed reaction is D-glycero-beta-D-manno-heptose 7-phosphate + ATP = D-glycero-beta-D-manno-heptose 1,7-bisphosphate + ADP + H(+). The enzyme catalyses D-glycero-beta-D-manno-heptose 1-phosphate + ATP + H(+) = ADP-D-glycero-beta-D-manno-heptose + diphosphate. The protein operates within nucleotide-sugar biosynthesis; ADP-L-glycero-beta-D-manno-heptose biosynthesis; ADP-L-glycero-beta-D-manno-heptose from D-glycero-beta-D-manno-heptose 7-phosphate: step 1/4. Its pathway is nucleotide-sugar biosynthesis; ADP-L-glycero-beta-D-manno-heptose biosynthesis; ADP-L-glycero-beta-D-manno-heptose from D-glycero-beta-D-manno-heptose 7-phosphate: step 3/4. Its function is as follows. Catalyzes the phosphorylation of D-glycero-D-manno-heptose 7-phosphate at the C-1 position to selectively form D-glycero-beta-D-manno-heptose-1,7-bisphosphate. Functionally, catalyzes the ADP transfer from ATP to D-glycero-beta-D-manno-heptose 1-phosphate, yielding ADP-D-glycero-beta-D-manno-heptose. This is Bifunctional protein HldE from Escherichia coli (strain 55989 / EAEC).